Consider the following 139-residue polypeptide: Large ribosomal subunit protein uL16c (139 aa).

Residues 1–20 (MLSPKRTKYRKHHRGRMKGK) are disordered.

The protein belongs to the universal ribosomal protein uL16 family. As to quaternary structure, part of the 50S ribosomal subunit.

The protein resides in the plastid. Its subcellular location is the chloroplast. In Pleurastrum terricola (Filamentous green alga), this protein is Large ribosomal subunit protein uL16c.